We begin with the raw amino-acid sequence, 311 residues long: MASSETLTITDYITHHLQNMTYGKLPAGYARHHADGEVHVLEHDTWTMAHTAEEAAAMGFNAVHVDTLGWGIFLALVVGFFMRRVAVKATTDTPRGMASFIEFLVEGINGVVKDVFHHKNRLVAPMAITVFSWVFMMNLMDLIPVDWLPMAAQIVSGNEHLFFKVVPTTDPNATLGMAVTVFILMLFFSVQQKGLWGFIKELTCHPFFAPRKFWYFNLILIPFNFILETVALIAKPISLGLRLFGNLYAGEMIFILIATLFSVGLLFGFLGGILQFGWAVLHILVILIQAFVFMVLTTVYMAMAHDRHDEH.

6 helical membrane passes run 62 to 82 (AVHVDTLGWGIFLALVVGFFM), 123 to 143 (VAPMAITVFSWVFMMNLMDLI), 179 to 199 (VTVFILMLFFSVQQKGLWGFI), 213 to 233 (FWYFNLILIPFNFILETVALI), 253 to 273 (IFILIATLFSVGLLFGFLGGI), and 276 to 296 (FGWAVLHILVILIQAFVFMVL).

It belongs to the ATPase A chain family. As to quaternary structure, F-type ATPases have 2 components, CF(1) - the catalytic core - and CF(0) - the membrane proton channel. CF(1) has five subunits: alpha(3), beta(3), gamma(1), delta(1), epsilon(1). CF(0) has three main subunits: a(1), b(2) and c(9-12). The alpha and beta chains form an alternating ring which encloses part of the gamma chain. CF(1) is attached to CF(0) by a central stalk formed by the gamma and epsilon chains, while a peripheral stalk is formed by the delta and b chains.

The protein localises to the cell inner membrane. In terms of biological role, key component of the proton channel; it plays a direct role in the translocation of protons across the membrane. The polypeptide is ATP synthase subunit a (Teredinibacter turnerae (strain ATCC 39867 / T7901)).